The sequence spans 89 residues: Phosphocarrier protein HPr (89 aa).

An HPr domain is found at 1-88; sequence MLQRDTTIIN…ALIANRFGEG (88 aa). His15 serves as the catalytic Pros-phosphohistidine intermediate.

It belongs to the HPr family.

The protein localises to the cytoplasm. General (non sugar-specific) component of the phosphoenolpyruvate-dependent sugar phosphotransferase system (sugar PTS). This major carbohydrate active-transport system catalyzes the phosphorylation of incoming sugar substrates concomitantly with their translocation across the cell membrane. The phosphoryl group from phosphoenolpyruvate (PEP) is transferred to the phosphoryl carrier protein HPr by enzyme I. Phospho-HPr then transfers it to the PTS EIIA domain. The chain is Phosphocarrier protein HPr (phbH) from Cupriavidus necator (strain ATCC 17699 / DSM 428 / KCTC 22496 / NCIMB 10442 / H16 / Stanier 337) (Ralstonia eutropha).